The chain runs to 358 residues: Methionine aminopeptidase 2 (358 aa).

Substrate is bound at residue His-109. A divalent metal cation-binding residues include Asp-130, Asp-141, and His-210. His-218 is a binding site for substrate. A divalent metal cation contacts are provided by Glu-243 and Glu-339.

The protein belongs to the peptidase M24A family. Methionine aminopeptidase eukaryotic type 2 subfamily. The cofactor is Co(2+). Zn(2+) is required as a cofactor. Requires Mn(2+) as cofactor. It depends on Fe(2+) as a cofactor.

Its subcellular location is the cytoplasm. The enzyme catalyses Release of N-terminal amino acids, preferentially methionine, from peptides and arylamides.. Functionally, cotranslationally removes the N-terminal methionine from nascent proteins. The N-terminal methionine is often cleaved when the second residue in the primary sequence is small and uncharged (Met-Ala-, Cys, Gly, Pro, Ser, Thr, or Val). The chain is Methionine aminopeptidase 2 from Encephalitozoon cuniculi (strain GB-M1) (Microsporidian parasite).